The primary structure comprises 239 residues: Sugar fermentation stimulation protein homolog (239 aa).

The protein belongs to the SfsA family.

This is Sugar fermentation stimulation protein homolog from Alcanivorax borkumensis (strain ATCC 700651 / DSM 11573 / NCIMB 13689 / SK2).